Reading from the N-terminus, the 227-residue chain is UPF0758 protein CPE2144 (227 aa).

In terms of domain architecture, MPN spans 105–227; it reads KISKPSDVAK…FISLKEKDIL (123 aa). Zn(2+) contacts are provided by His-176, His-178, and Asp-189. A JAMM motif motif is present at residues 176–189; sequence HNHPSGDPTPSRDD.

Belongs to the UPF0758 family.

The polypeptide is UPF0758 protein CPE2144 (Clostridium perfringens (strain 13 / Type A)).